A 518-amino-acid polypeptide reads, in one-letter code: Tropomyosin-1, isoforms 33/34 (518 aa).

The stretch at 14-267 (DKDGALERAL…DDLIVEKERY (254 aa)) forms a coiled coil. 2 disordered regions span residues 101 to 125 (RSEE…ESER) and 288 to 518 (FWNP…APPA). The span at 293–305 (NPKPPTPKLPTPT) shows a compositional bias: pro residues. A compositionally biased stretch (low complexity) spans 318-348 (AAEAAAAAEAEAAEAAAAAGEAGPDGAPAAP). Pro residues-rich tracts occupy residues 357 to 374 (EPTP…PPPF) and 394 to 405 (EPPPPGSEPEPV). Residues 406–518 (PAAEGEAAPA…AAAEGEAPPA (113 aa)) are compositionally biased toward low complexity.

This sequence belongs to the tropomyosin family. As to quaternary structure, homodimer. Both isoforms are only expressed in indirect flight muscles.

Its subcellular location is the cytoplasm. The protein resides in the cytoskeleton. Functionally, tropomyosin, in association with the troponin complex, plays a central role in the calcium dependent regulation of muscle contraction. This is Tropomyosin-1, isoforms 33/34 (Tm1) from Drosophila melanogaster (Fruit fly).